The chain runs to 213 residues: ATP-dependent Clp protease proteolytic subunit (213 aa).

The Nucleophile role is filled by Ser-114. His-139 is an active-site residue.

The protein belongs to the peptidase S14 family. Fourteen ClpP subunits assemble into 2 heptameric rings which stack back to back to give a disk-like structure with a central cavity, resembling the structure of eukaryotic proteasomes.

The protein resides in the cytoplasm. The catalysed reaction is Hydrolysis of proteins to small peptides in the presence of ATP and magnesium. alpha-casein is the usual test substrate. In the absence of ATP, only oligopeptides shorter than five residues are hydrolyzed (such as succinyl-Leu-Tyr-|-NHMec, and Leu-Tyr-Leu-|-Tyr-Trp, in which cleavage of the -Tyr-|-Leu- and -Tyr-|-Trp bonds also occurs).. Functionally, cleaves peptides in various proteins in a process that requires ATP hydrolysis. Has a chymotrypsin-like activity. Plays a major role in the degradation of misfolded proteins. This is ATP-dependent Clp protease proteolytic subunit from Pseudomonas entomophila (strain L48).